Reading from the N-terminus, the 181-residue chain is Insulin-like growth factor 2 (181 aa).

The first 24 residues, 1–24, serve as a signal peptide directing secretion; that stretch reads MGIPMRKPLLVLLVFLALASCCYA. Residues 25-52 form a b region; it reads AYRPSETLCGGELVDTLQFVCGDRGFYF. Disulfide bonds link Cys-33–Cys-71, Cys-45–Cys-84, and Cys-70–Cys-75. The c stretch occupies residues 53–64; that stretch reads SRPASRVNRRSR. The segment at 65–85 is a; it reads GIVEECCFRSCDLALLETYCA. Positions 86–91 are d; the sequence is TPAKSE. A propeptide spans 92–181 (e peptide); that stretch reads RDVSTPPTVL…ASPEASGHRK (90 aa). Positions 151-181 are disordered; that stretch reads EAKRHRPLTARPTRDPAAHGGASPEASGHRK. O-linked (GalNAc...) threonine glycosylation occurs at Thr-163.

This sequence belongs to the insulin family. As to quaternary structure, interacts with MYORG; this interaction is required for IGF2 secretion. Interacts with integrins ITGAV:ITGB3 and ITGA6:ITGB4; integrin-binding is required for IGF2 signaling. Interacts with IGFBP2. In terms of processing, proteolytically processed by PCSK4, proIGF2 is cleaved at Arg-128 and Arg-92 to generate big-IGF2 and mature IGF2.

It localises to the secreted. The insulin-like growth factors possess growth-promoting activity. Major fetal growth hormone in mammals. Plays a key role in regulating fetoplacental development. IGF2 is influenced by placental lactogen. Also involved in tissue differentiation. In adults, involved in glucose metabolism in adipose tissue, skeletal muscle and liver. Acts as a ligand for integrin which is required for IGF2 signaling. Positively regulates myogenic transcription factor MYOD1 function by facilitating the recruitment of transcriptional coactivators, thereby controlling muscle terminal differentiation. Inhibits myoblast differentiation and modulates metabolism via increasing the mitochondrial respiration rate. In terms of biological role, preptin undergoes glucose-mediated co-secretion with insulin, and acts as a physiological amplifier of glucose-mediated insulin secretion. Exhibits osteogenic properties by increasing osteoblast mitogenic activity through phosphoactivation of MAPK1 and MAPK3. In Sus scrofa (Pig), this protein is Insulin-like growth factor 2.